We begin with the raw amino-acid sequence, 342 residues long: MLKDQNLDIERKQDHIEINLTKNVESTLKSGFESIHFIHNALPEINYDSVNTTTTFLGKSLQAPILISSMTGGTTRARDINYRLAQVAQKAGIAMGLGSMRVLLTEPDTIKTFAVRHIAPDIPLLANIGAVQLNYGVTPKECQYLVDAIKADALILHLNVLQELTQPEGNRNWEKLLPKIREVVHYLSIPVIVKEVGYGLSKKVAESLIEAGVKVLDIAGSGGTSWSQVEAYRATNSLQNRIASSFINWGIPTLDSLKMVREVSKDIPIITSGGLKSGIDGAKAIRIGANIFGLAGQFLKAADTSESLLFEEIQLIIEQLKITMLCTGSRTLKDLAKAEIRL.

Arg-11 to Lys-12 is a substrate binding site. FMN-binding positions include Ser-68, Ser-69–Thr-71, Ser-99, and Asn-127. Position 99 to 101 (Ser-99 to Arg-101) interacts with substrate. Gln-162 is a binding site for substrate. Residue Glu-163 coordinates Mg(2+). Residues Lys-194, Thr-224, Gly-274 to Lys-276, and Ala-295 to Gly-296 each bind FMN.

This sequence belongs to the IPP isomerase type 2 family. In terms of assembly, homooctamer. Dimer of tetramers. FMN serves as cofactor. Requires NADPH as cofactor. The cofactor is Mg(2+).

The protein resides in the cytoplasm. It catalyses the reaction isopentenyl diphosphate = dimethylallyl diphosphate. Involved in the biosynthesis of isoprenoids. Catalyzes the 1,3-allylic rearrangement of the homoallylic substrate isopentenyl (IPP) to its allylic isomer, dimethylallyl diphosphate (DMAPP). The polypeptide is Isopentenyl-diphosphate delta-isomerase (Rickettsia peacockii (strain Rustic)).